Reading from the N-terminus, the 382-residue chain is Leucoanthocyanidin reductase (382 aa).

NADP(+)-binding positions include 19–25, Arg44, and Lys52; that span reads GGTGFIG. Lys142 serves as the catalytic Proton acceptor. Arg146 is a binding site for NADP(+).

This sequence belongs to the NmrA-type oxidoreductase family. Isoflavone reductase subfamily. Monomer.

The enzyme catalyses (2R,3S)-catechin + NADP(+) + H2O = (2R,3S,4S)-leucocyanidin + NADPH + H(+). It functions in the pathway flavonoid metabolism; proanthocyanidin biosynthesis. In terms of biological role, catalyzes the synthesis of catechin from 3,4-cis-leucocyanidin. Also synthesizes afzelechin and gallocatechin. The chain is Leucoanthocyanidin reductase (LAR) from Desmodium uncinatum (Silverleaf Spanish clover).